Here is a 189-residue protein sequence, read N- to C-terminus: MKNVSPTYLKHQFLIAMPHMADPNFAQTLTYIVEHTAKGAMGLVINRPQELNLADILEQLRPEVDPPARCQGVPIYIGGPVQTDRGFVLHPTGPKFQATVDLEGVSLSTSQDVLFAIADGVGPEQSVITLGYAGWEAGQLEAELASNAWLTCPFDAEILFNTPSELRLEAAAAKLRVNLNLLTSQAGHA.

The protein belongs to the UPF0301 (AlgH) family.

This chain is UPF0301 protein PFLU_5755, found in Pseudomonas fluorescens (strain SBW25).